Consider the following 533-residue polypeptide: Beta-1,4-mannosyl-glycoprotein 4-beta-N-acetylglucosaminyltransferase (533 aa).

At 1–7 (MKMRRYK) the chain is on the cytoplasmic side. The helical; Signal-anchor for type II membrane protein transmembrane segment at 8–23 (LFLMFCMAGLCLISFL) threads the bilayer. Residues 24-533 (HFFKTLSYVT…ARGKLDEAEV (510 aa)) lie on the Lumenal side of the membrane. The segment at 119-158 (KPGTKMLERPPPGRPEEKPEGANGSSARRPPRYLLSARER) is disordered. 4 N-linked (GlcNAc...) asparagine glycosylation sites follow: N141, N241, N259, and N397. Positions 507–533 (STAAGGWRHRGPEGRPPARGKLDEAEV) are disordered.

It belongs to the glycosyltransferase 17 family. Interacts with MGAT4D.

It localises to the golgi apparatus membrane. It carries out the reaction N(4)-{beta-D-GlcNAc-(1-&gt;2)-alpha-D-Man-(1-&gt;3)-[beta-D-GlcNAc-(1-&gt;2)-alpha-D-Man-(1-&gt;6)]-beta-D-Man-(1-&gt;4)-beta-D-GlcNAc-(1-&gt;4)-beta-D-GlcNAc}-L-asparaginyl-[protein] + UDP-N-acetyl-alpha-D-glucosamine = N(4)-{beta-D-GlcNAc-(1-&gt;2)-alpha-D-Man-(1-&gt;3)-[beta-D-GlcNAc-(1-&gt;4)]-[beta-D-GlcNAc-(1-&gt;2)-alpha-D-Man-(1-&gt;6)]-beta-D-Man-(1-&gt;4)-beta-D-GlcNAc-(1-&gt;4)-beta-D-GlcNAc}-L-asparaginyl-[protein] + UDP + H(+). It functions in the pathway protein modification; protein glycosylation. It is involved in the regulation of the biosynthesis and biological function of glycoprotein oligosaccharides. Catalyzes the addition of N-acetylglucosamine in beta 1-4 linkage to the beta-linked mannose of the trimannosyl core of N-linked sugar chains, called bisecting N-acetylglucosamine (GlcNAc). It is one of the most important enzymes involved in the regulation of the biosynthesis of glycoprotein oligosaccharides. The addition of this bisecting GlcNAc residue alters not only the composition, but also the conformation of the N-glycan. The introduction of the bisecting GlcNAc residue results in the suppression of further processing and elongation of N-glycans, precluding the formation of beta-1,6 GlcNAc branching, catalyzed by MGAT5 since it is unable to use the bisected oligosaccharide as a substrate. Addition of bisecting N-acetylglucosamine to CDH1/E-cadherin modulates CDH1 cell membrane location. Inhibits NeuAc-alpha-2,3-Gal-beta-1,4-GlcNAc- formation which modulates sialylation levels and plays a role in cell migration regulation. In brain, addition of bisecting N-acetylglucosamine to BACE1 blocks its lysosomal targeting in response to oxidative stress and further degradation which increases its location to early endosome and the APP cleavage. The sequence is that of Beta-1,4-mannosyl-glycoprotein 4-beta-N-acetylglucosaminyltransferase from Homo sapiens (Human).